A 66-amino-acid polypeptide reads, in one-letter code: Beta-mammal toxin Co2 (66 aa).

The region spanning Lys1–Asn66 is the LCN-type CS-alpha/beta domain. Intrachain disulfides connect Cys12–Cys65, Cys16–Cys41, Cys25–Cys46, and Cys29–Cys48.

In terms of tissue distribution, expressed by the venom gland.

It localises to the secreted. Beta toxins bind voltage-independently at site-4 of sodium channels (Nav) and shift the voltage of activation toward more negative potentials thereby affecting sodium channel activation and promoting spontaneous and repetitive firing. This toxin acts on human Nav1.1/SCN1A, Nav1.2/SCN2A, Nav1.4/SCN4A and Nav1.6/SCN8A voltage-gated sodium channels. Also, it reduces the peak of sodium currents in Nav1.5/SCN5A at all potentials. In vivo, is lethal to mice when intraperitoneally injected at a dose of 5ug. No activity is observed when injected into crickets or woodlice. This is Beta-mammal toxin Co2 from Centruroides ornatus (Scorpion).